Reading from the N-terminus, the 348-residue chain is D-alanine--D-alanine ligase (348 aa).

One can recognise an ATP-grasp domain in the interval 132–334 (KRVLESIGIP…YPDLIEVLVT (203 aa)). 162–217 (LARLTFPIFVKPANMGSSVGISKAQTKVELRKAIQLALTYDSRVLIEQGVVAREIE) contacts ATP. Residues D288, E301, and N303 each coordinate Mg(2+).

Belongs to the D-alanine--D-alanine ligase family. Requires Mg(2+) as cofactor. The cofactor is Mn(2+).

Its subcellular location is the cytoplasm. It carries out the reaction 2 D-alanine + ATP = D-alanyl-D-alanine + ADP + phosphate + H(+). The protein operates within cell wall biogenesis; peptidoglycan biosynthesis. In terms of biological role, cell wall formation. The polypeptide is D-alanine--D-alanine ligase (Streptococcus pyogenes serotype M2 (strain MGAS10270)).